A 166-amino-acid chain; its full sequence is Small ribosomal subunit protein uS5 (166 aa).

The S5 DRBM domain maps to 11–74 (LQEKLIAVNR…EKARRNMINV (64 aa)).

This sequence belongs to the universal ribosomal protein uS5 family. In terms of assembly, part of the 30S ribosomal subunit. Contacts proteins S4 and S8.

In terms of biological role, with S4 and S12 plays an important role in translational accuracy. Located at the back of the 30S subunit body where it stabilizes the conformation of the head with respect to the body. The polypeptide is Small ribosomal subunit protein uS5 (Actinobacillus succinogenes (strain ATCC 55618 / DSM 22257 / CCUG 43843 / 130Z)).